Reading from the N-terminus, the 1052-residue chain is Multidrug resistance protein MdtB (1052 aa).

11 helical membrane passes run 15–37, 345–362, 367–389, 396–418, 438–460, 472–494, 535–557, 867–889, 909–931, 968–990, and 1000–1022; these read LFIL…GIIG, FELL…YLFL, ATII…MYFL, LTLM…VIEN, GEIG…PLLF, FAVT…TPMM, HPWL…YLLI, LWLI…ESFI, LMLT…IGIV, ILMT…GVGA, and MVGG…YLLF. The tract at residues 1032–1052 is disordered; the sequence is KNRHRDEDIDSSELLNGQEPQ.

The protein belongs to the resistance-nodulation-cell division (RND) (TC 2.A.6) family. MdtB subfamily. In terms of assembly, part of a tripartite efflux system composed of MdtA, MdtB and MdtC. MdtB forms a heteromultimer with MdtC.

It is found in the cell inner membrane. The sequence is that of Multidrug resistance protein MdtB from Yersinia pseudotuberculosis serotype I (strain IP32953).